Consider the following 512-residue polypeptide: Cobyric acid synthase (512 aa).

Residues 251 to 451 form the GATase cobBQ-type domain; that stretch reads ALDIAVIRLP…IHGLFDSHHF (201 aa). The Nucleophile role is filled by C332. The active site involves H443.

Belongs to the CobB/CobQ family. CobQ subfamily.

It participates in cofactor biosynthesis; adenosylcobalamin biosynthesis. Functionally, catalyzes amidations at positions B, D, E, and G on adenosylcobyrinic A,C-diamide. NH(2) groups are provided by glutamine, and one molecule of ATP is hydrogenolyzed for each amidation. The sequence is that of Cobyric acid synthase from Yersinia enterocolitica serotype O:8 / biotype 1B (strain NCTC 13174 / 8081).